An 87-amino-acid chain; its full sequence is Large ribosomal subunit protein bL31B (87 aa).

This sequence belongs to the bacterial ribosomal protein bL31 family. Type B subfamily. In terms of assembly, part of the 50S ribosomal subunit.

The sequence is that of Large ribosomal subunit protein bL31B from Burkholderia pseudomallei (strain 1106a).